A 431-amino-acid polypeptide reads, in one-letter code: 3'3'-cGAMP-specific phosphodiesterase 1 (431 aa).

In terms of domain architecture, HD spans 39-155; sequence DINHGHRVGY…IFLADRVDYL (117 aa). The HD-GYP domain maps to 231–427; sequence GVEEIMSIAM…YYQLSIAESP (197 aa). Residues histidine 288 and aspartate 289 each coordinate a divalent metal cation. Lysine 292 serves as the catalytic Proton donor. A divalent metal cation is bound by residues histidine 317, histidine 341, histidine 342, and aspartate 370.

As to quaternary structure, monomer. The cofactor is Ca(2+). Mg(2+) serves as cofactor.

The catalysed reaction is 3',3'-cGAMP + H2O = 5'-pApG-3' + H(+). It catalyses the reaction 5'-pApG-3' + H2O = 5'-ApG-3' + phosphate. Functionally, phosphodiesterase (PDE) that catalyzes the hydrolysis of 3'3'-cyclic GMP-AMP (3'3'-cGAMP), leading to linear 5'-pApG. Also displays 5'-nucleotidase activity, further hydrolyzing 5'-pApG to 5'-ApG. Counteracts the function of the 3'3'-cGAMP synthase DncV, and is involved in the modulation of intracellular 3'3'-cGAMP levels. Enhances bacterial chemotaxis and inhibits intestinal colonization in vivo. Thus exerts a crucial role in regulating bacterial infectivity through catalyzing 3'3'-cGAMP degradation. Is specific for 3'3'-cGAMP since it cannot degrade other cGAMP linkage isomers (3'2'-, 2'3'-, and 2'2'-cGAMPs). Is also able to hydrolyze c-di-GMP but not c-di-AMP. This Vibrio cholerae serotype O1 (strain ATCC 39315 / El Tor Inaba N16961) protein is 3'3'-cGAMP-specific phosphodiesterase 1.